A 116-amino-acid chain; its full sequence is Secreted RxLR effector protein 9 (116 aa).

An N-terminal signal peptide occupies residues 1-17 (MRLIYIFMVSIVTTLHA). Positions 49 to 64 (RILRGTDGNVNREQER) match the RxLR-dEER motif.

It belongs to the RxLR effector family.

The protein resides in the secreted. It localises to the host cytoplasm. Its subcellular location is the host nucleus. Functionally, effector that acts as a broad suppressor of cell death to interrupt plant immunity. Inhibits cell death induced by cell death-inducing proteins, including the PAMP elicitor INF1 from P.infestans. In Plasmopara viticola (Downy mildew of grapevine), this protein is Secreted RxLR effector protein 9.